A 506-amino-acid chain; its full sequence is Histidine ammonia-lyase (506 aa).

The segment at residues 141–143 (ASG) is a cross-link (5-imidazolinone (Ala-Gly)). S142 is subject to 2,3-didehydroalanine (Ser).

This sequence belongs to the PAL/histidase family. Post-translationally, contains an active site 4-methylidene-imidazol-5-one (MIO), which is formed autocatalytically by cyclization and dehydration of residues Ala-Ser-Gly.

The protein localises to the cytoplasm. The catalysed reaction is L-histidine = trans-urocanate + NH4(+). Its pathway is amino-acid degradation; L-histidine degradation into L-glutamate; N-formimidoyl-L-glutamate from L-histidine: step 1/3. This Burkholderia multivorans (strain ATCC 17616 / 249) protein is Histidine ammonia-lyase.